Reading from the N-terminus, the 179-residue chain is Replication restart protein DnaT (179 aa).

Positions 156–179 (GGLPKRDVNTVSEPDSQIPPGFRG) are disordered.

The protein belongs to the DnaT family. In terms of assembly, homooligomerizes. Interacts with PriB. Component of the replication restart primosome. Primosome assembly occurs via a 'hand-off' mechanism. PriA binds to replication forks, subsequently PriB then DnaT bind; DnaT then displaces ssDNA to generate the helicase loading substrate.

In terms of biological role, involved in the restart of stalled replication forks, which reloads the replicative helicase on sites other than the origin of replication. Can function in multiple replication restart pathways. Displaces ssDNA from a PriB-ssDNA complex. Probably forms a spiral filament on ssDNA. The polypeptide is Replication restart protein DnaT (Escherichia coli O1:K1 / APEC).